The sequence spans 156 residues: MQKIAGKAAASPKKGGAPNLLCVWASAEKPPPELARVTELHSLMPWGSLLRGMLGSDTEMRPGLAELCVPGAEFLITLNLHAWRPPVPEVGDHPEPTPESAMELLAPYYAAAGWTLEEARYFGAEELDALATSWTRRLGSTRDELDVLGITGVIGK.

In terms of biological role, modifies 16S rRNA so making ribosomes resistant to certain aminoglycosides. The sequence is that of rRNA methyltransferase (kamC) from Saccharopolyspora hirsuta.